The following is a 339-amino-acid chain: MTIQKNWQELIRPNKLQVSPGSDATRFATLVAEPLERGFGQTLGNALRRVLLSSLQGAAVQSVQIDGVLHEFSSIAGVREDVTDIVLNIKDISLKMQGEGPKRMVVKKQGPGVVTAGDIQTVGDIVVLNPDLQICTLDEGAEIRMEFTVNTGKGYVAAERNRPEDAPIGLIPVDSLYSPVRKVSYKVENTREGQILDYDKLTMTVETNGALTPDDAVAFAARILQDQLNVFVNFEEPRKEVTQEIIPDLAFNPAFLKKVDELELSVRSANCLKNDNIVYIGDLVQKSEAEMLRTPNFGRKSLNEIKEVLAQMGLHLGMEVPGWPPENIDELAKRFEDHY.

Residues 1–235 are alpha N-terminal domain (alpha-NTD); sequence MTIQKNWQEL…DQLNVFVNFE (235 aa). Positions 251-339 are alpha C-terminal domain (alpha-CTD); the sequence is FNPAFLKKVD…ELAKRFEDHY (89 aa).

This sequence belongs to the RNA polymerase alpha chain family. In terms of assembly, homodimer. The RNAP catalytic core consists of 2 alpha, 1 beta, 1 beta' and 1 omega subunit. When a sigma factor is associated with the core the holoenzyme is formed, which can initiate transcription.

The catalysed reaction is RNA(n) + a ribonucleoside 5'-triphosphate = RNA(n+1) + diphosphate. Its function is as follows. DNA-dependent RNA polymerase catalyzes the transcription of DNA into RNA using the four ribonucleoside triphosphates as substrates. The sequence is that of DNA-directed RNA polymerase subunit alpha from Rhodopseudomonas palustris (strain BisB5).